The sequence spans 483 residues: Glutamate--tRNA ligase (483 aa).

The 'HIGH' region motif lies at 9–19; it reads PSPTGFLHIGN. A 'KMSKS' region motif is present at residues 253–257; that stretch reads KLSKR. Lys-256 serves as a coordination point for ATP.

The protein belongs to the class-I aminoacyl-tRNA synthetase family. Glutamate--tRNA ligase type 1 subfamily. Monomer.

The protein localises to the cytoplasm. It catalyses the reaction tRNA(Glu) + L-glutamate + ATP = L-glutamyl-tRNA(Glu) + AMP + diphosphate. Functionally, catalyzes the attachment of glutamate to tRNA(Glu) in a two-step reaction: glutamate is first activated by ATP to form Glu-AMP and then transferred to the acceptor end of tRNA(Glu). This Mycoplasma capricolum subsp. capricolum (strain California kid / ATCC 27343 / NCTC 10154) protein is Glutamate--tRNA ligase.